Reading from the N-terminus, the 414-residue chain is 2,3-diketo-5-methylthiopentyl-1-phosphate enolase (414 aa).

The Proton acceptor role is filled by Lys99. Residues Lys148, 174 to 177, His265, Gly338, and 360 to 361 contribute to the substrate site; these read KDDE and GG. 3 residues coordinate Mg(2+): Lys174, Asp176, and Glu177. The residue at position 174 (Lys174) is an N6-carboxylysine.

This sequence belongs to the RuBisCO large chain family. Type IV subfamily. Homodimer. Mg(2+) is required as a cofactor.

It catalyses the reaction 5-methylsulfanyl-2,3-dioxopentyl phosphate = 2-hydroxy-5-methylsulfanyl-3-oxopent-1-enyl phosphate. Its pathway is amino-acid biosynthesis; L-methionine biosynthesis via salvage pathway; L-methionine from S-methyl-5-thio-alpha-D-ribose 1-phosphate: step 3/6. Functionally, catalyzes the enolization of 2,3-diketo-5-methylthiopentyl-1-phosphate (DK-MTP-1-P) into 2-hydroxy-3-keto-5-methylthiopentenyl-1-phosphate (HK-MTPenyl-1-P). The protein is 2,3-diketo-5-methylthiopentyl-1-phosphate enolase of Bacillus cereus (strain AH187).